The following is a 232-amino-acid chain: Putative caffeoyl-CoA O-methyltransferase At1g67980 (232 aa).

Lys-8 lines the substrate pocket. Residues Val-52, Glu-74, Gly-76–Val-77, Ser-82, and Asp-100 each bind S-adenosyl-L-methionine. Substrate is bound at residue Asp-149. Residue Asp-149 coordinates a divalent metal cation. Asp-151 contributes to the S-adenosyl-L-methionine binding site. Positions 175 and 176 each coordinate a divalent metal cation.

This sequence belongs to the class I-like SAM-binding methyltransferase superfamily. Cation-dependent O-methyltransferase family. CCoAMT subfamily. A divalent metal cation serves as cofactor.

It catalyses the reaction (E)-caffeoyl-CoA + S-adenosyl-L-methionine = (E)-feruloyl-CoA + S-adenosyl-L-homocysteine + H(+). Its pathway is aromatic compound metabolism; phenylpropanoid biosynthesis. In terms of biological role, methylates caffeoyl-CoA to feruloyl-CoA and 5-hydroxyferuloyl-CoA to sinapoyl-CoA. Plays a role in the synthesis of feruloylated polysaccharides. Involved in the reinforcement of the plant cell wall. Also involved in the responding to wounding or pathogen challenge by the increased formation of cell wall-bound ferulic acid polymers. The protein is Putative caffeoyl-CoA O-methyltransferase At1g67980 of Arabidopsis thaliana (Mouse-ear cress).